The sequence spans 242 residues: Beta-carotene ketolase (242 aa).

It carries out the reaction all-trans-beta-carotene + 2 AH2 + 2 O2 = echinenone + 2 A + 3 H2O. The enzyme catalyses echinenone + 2 AH2 + 2 O2 = canthaxanthin + 2 A + 3 H2O. The protein operates within carotenoid biosynthesis; astaxanthin biosynthesis. In terms of biological role, converts beta-carotene to canthaxanthin via echinenone. The protein is Beta-carotene ketolase of Paracoccus sp. (strain PC1) (Alcaligenes sp. (strain PC1)).